The following is an 82-amino-acid chain: U16-lycotoxin-Ls1a (82 aa).

Positions M1–A22 are cleaved as a signal peptide. A propeptide spanning residues E23–R34 is cleaved from the precursor. 4 disulfides stabilise this stretch: C36–C51, C43–C56, C50–C67, and C58–C65.

It belongs to the neurotoxin 02 (plectoxin) family. 04 (U16-lycotoxin) subfamily. In terms of tissue distribution, expressed by the venom gland.

It is found in the secreted. The protein is U16-lycotoxin-Ls1a of Lycosa singoriensis (Wolf spider).